A 462-amino-acid chain; its full sequence is Metal cation symporter ZIP14 (462 aa).

The signal sequence occupies residues 1–16 (MPLLLLSALLPFSLMA). Residues 17–138 (GPTPSTGKEL…PSPGEVWGYG (122 aa)) are Extracellular-facing. Residues Asn42, Asn68, Asn83, and Asn119 are each glycosylated (N-linked (GlcNAc...) asparagine). A helical transmembrane segment spans residues 139–159 (FLCVTVISLCSLFGAGVVPFM). Over 160 to 167 (KKACYKRL) the chain is Cytoplasmic. A helical transmembrane segment spans residues 168–188 (LLFCIALAIGTLFSNALFQLI). The Extracellular segment spans residues 189–201 (PEAFGFNPLEDSY). The chain crosses the membrane as a helical span at residues 202 to 222 (VFTSSVIFGGFYLFFFTEKVL). At 223–322 (KMMLKQKHEH…SDGLHNFIDG (100 aa)) the chain is on the cytoplasmic side. Residues 230–237 (HEHGHSHY) carry the HHHGHXHX-motif motif. A disordered region spans residues 235 to 285 (SHYSADTSKRDAEEGVTEKLQNGDLDHMIPPPHGSESDLRGDEKAVQQQDL). Composition is skewed to basic and acidic residues over residues 241-251 (TSKRDAEEGVT) and 269-279 (SESDLRGDEKA). Residues 323-343 (LAIGASFTVSVFQGVSTSIAI) form a helical membrane-spanning segment. The Extracellular segment spans residues 344–367 (LCEEFPHELGDFVILLNAGMSIPQ). The short motif at 346–351 (EEFPHE) is the XEXPHE-motif element. Residues 368–388 (ALFFNFLSACCCYLGLAFGIL) form a helical membrane-spanning segment. The Cytoplasmic segment spans residues 389-396 (AGSHFSSN). A helical transmembrane segment spans residues 397–417 (WIFALAGGMFLYIALSDMFPE). The Extracellular portion of the chain corresponds to 418 to 431 (MNEVSKEDEEGGRA). Residues 432-452 (FSAFMIQNAGLLTGFAIMLLL) form a helical membrane-spanning segment. Over 453-462 (TTFSGQIQLG) the chain is Cytoplasmic.

It belongs to the ZIP transporter (TC 2.A.5) family. As to quaternary structure, homotrimer.

It localises to the cell membrane. The protein resides in the apical cell membrane. Its subcellular location is the basolateral cell membrane. The protein localises to the early endosome membrane. It is found in the late endosome membrane. It localises to the lysosome membrane. The catalysed reaction is Zn(2+)(out) + 2 hydrogencarbonate(out) = Zn(2+)(in) + 2 hydrogencarbonate(in). The enzyme catalyses Mn(2+)(out) + 2 hydrogencarbonate(out) = Mn(2+)(in) + 2 hydrogencarbonate(in). It carries out the reaction Fe(2+)(out) + 2 hydrogencarbonate(out) = Fe(2+)(in) + 2 hydrogencarbonate(in). It catalyses the reaction Cd(2+)(out) + 2 hydrogencarbonate(out) = Cd(2+)(in) + 2 hydrogencarbonate(in). In terms of biological role, electroneutral transporter of the plasma membrane mediating the cellular uptake of the divalent metal cations zinc, manganese and iron that are important for tissue homeostasis, metabolism, development and immunity. Functions as an energy-dependent symporter, transporting through the membranes an electroneutral complex composed of a divalent metal cation and two bicarbonate anions. Beside these endogenous cellular substrates, can also import cadmium a non-essential metal which is cytotoxic and carcinogenic. This chain is Metal cation symporter ZIP14, found in Xenopus tropicalis (Western clawed frog).